Consider the following 736-residue polypeptide: Subtilisin-like protease SBT1.9 (736 aa).

Positions 1–20 (MGMTVVIILVFSFFVAIVTA) are cleaved as a signal peptide. The propeptide at 21–101 (ETSPYIIHMD…FTKDLPVKLH (81 aa)) is activation peptide. The Inhibitor I9 domain occupies 25–101 (YIIHMDLSAK…FTKDLPVKLH (77 aa)). The region spanning 103 to 582 (TFSPKFIGLN…AGHVSTNKVL (480 aa)) is the Peptidase S8 domain. Residue asparagine 112 is glycosylated (N-linked (GlcNAc...) asparagine). The active-site Charge relay system is the aspartate 133. Residue asparagine 162 is glycosylated (N-linked (GlcNAc...) asparagine). Histidine 205 serves as the catalytic Charge relay system. 3 N-linked (GlcNAc...) asparagine glycosylation sites follow: asparagine 220, asparagine 381, and asparagine 453. One can recognise a PA domain in the interval 367 to 441 (VQFPVTYIES…VAFIGSKHRE (75 aa)). The Charge relay system role is filled by serine 529. Asparagine 617 is a glycosylation site (N-linked (GlcNAc...) asparagine).

Belongs to the peptidase S8 family.

Its subcellular location is the secreted. The polypeptide is Subtilisin-like protease SBT1.9 (Arabidopsis thaliana (Mouse-ear cress)).